Consider the following 66-residue polypeptide: Clarkitoxin-I-Mdum (66 aa).

Intrachain disulfides connect Cys3–Cys24, Cys17–Cys42, Cys46–Cys59, and Cys60–Cys65.

Expressed by the venom gland.

The protein localises to the secreted. No toxicity is observed upon intravenous or intracerebroventricular injection into mice. Has no cytotoxic activity towards C2C12 cells at 100 ug/ml. The sequence is that of Clarkitoxin-I-Mdum from Micrurus dumerilii (Coral snake).